The chain runs to 734 residues: MATKFPKFSQALAQDPTTRRIWYGIATAHDFESHDGMTEENLYQKIFSSHFGHIAIIFLWTSGNLFHVAWQGNFEQWVAQPMKIKPIAHAIWDPHFGQPAVKAFTKGGASYPVDITFSGVYHWWYTIGMRTNNDLYNGSLFLLILSAIMLFAGWLHLQPKFKPGLSWFKNNESRLNHHLSGLFGLSSLAWTGHLIHVAIPESRGQHVGWDNFTYTLPHPAGLQPFFTGNWSVYASDPDTSNHIFGTSQGAGTAILTFLGGFHPQSQSLWLTDMAHHHLAIAIVFIIAGHMYKTNWGIGHNIKDILDAHRPPSGRLGKGHKGLYATITNSLHMQLGLALASLGVITSLVAQHMYAMPPYAFMAKDFTTQAALYTHHQYIAGFLMVGAFAHGAIFFIRDYDPEENKNNVLFRMLDHKEAIISHLSWVSLFLGFHTLGLYIHNDTMIAFGTPEKQILIEPVFAQWIQASSGKALYGFNTLLSSSSSIATKAGSSVWLPGWLEAINSNKNSLFLAIGPGDFLVHHAIALGLHTTTLILVKGALDARGSKLMPDKKDFGYSFPCDGPGRGGTCDISAWDAFYLSVFWMLNTIGWVTFYWHWKHMTIWQGNVNQFNESSTYLMGWLRDYLWLNSSPLINGYNPYGMNNLSVWAWMFLFGHLVWATGFMFLISWRGYWQELIETLAWAHERTPLANLVRWKDKPVALSIVQARLVGLVHFSVGYILTYAAFVIASTSGKFG.

8 helical membrane-spanning segments follow: residues 46–69 (IFSSHFGHIAIIFLWTSGNLFHVA), 135–158 (LYNGSLFLLILSAIMLFAGWLHLQ), 175–199 (LNHHLSGLFGLSSLAWTGHLIHVAI), 273–291 (MAHHHLAIAIVFIIAGHMY), 330–353 (LHMQLGLALASLGVITSLVAQHMY), 369–395 (AALYTHHQYIAGFLMVGAFAHGAIFFI), 417–439 (AIISHLSWVSLFLGFHTLGLYIH), and 517–535 (FLVHHAIALGLHTTTLILV). [4Fe-4S] cluster contacts are provided by Cys559 and Cys568. 2 consecutive transmembrane segments (helical) span residues 575–596 (AFYLSVFWMLNTIGWVTFYWHW) and 643–665 (LSVWAWMFLFGHLVWATGFMFLI). Chlorophyll a is bound by residues His654, Met662, and Tyr670. Residue Trp671 coordinates phylloquinone. Residues 707-727 (LVGLVHFSVGYILTYAAFVIA) traverse the membrane as a helical segment.

This sequence belongs to the PsaA/PsaB family. In terms of assembly, the PsaA/B heterodimer binds the P700 chlorophyll special pair and subsequent electron acceptors. PSI consists of a core antenna complex that captures photons, and an electron transfer chain that converts photonic excitation into a charge separation. The eukaryotic PSI reaction center is composed of at least 11 subunits. P700 is a chlorophyll a/chlorophyll a' dimer, A0 is one or more chlorophyll a, A1 is one or both phylloquinones and FX is a shared 4Fe-4S iron-sulfur center. is required as a cofactor.

It localises to the plastid. Its subcellular location is the chloroplast thylakoid membrane. It carries out the reaction reduced [plastocyanin] + hnu + oxidized [2Fe-2S]-[ferredoxin] = oxidized [plastocyanin] + reduced [2Fe-2S]-[ferredoxin]. Its function is as follows. PsaA and PsaB bind P700, the primary electron donor of photosystem I (PSI), as well as the electron acceptors A0, A1 and FX. PSI is a plastocyanin/cytochrome c6-ferredoxin oxidoreductase, converting photonic excitation into a charge separation, which transfers an electron from the donor P700 chlorophyll pair to the spectroscopically characterized acceptors A0, A1, FX, FA and FB in turn. Oxidized P700 is reduced on the lumenal side of the thylakoid membrane by plastocyanin or cytochrome c6. This is Photosystem I P700 chlorophyll a apoprotein A2 from Gracilaria tenuistipitata var. liui (Red alga).